The primary structure comprises 276 residues: Formamidopyrimidine-DNA glycosylase (276 aa).

The Schiff-base intermediate with DNA role is filled by Pro2. Glu3 (proton donor) is an active-site residue. Lys58 acts as the Proton donor; for beta-elimination activity in catalysis. Positions 94, 112, and 157 each coordinate DNA. The FPG-type zinc-finger motif lies at 242 to 276; sequence FVYDRAGLPCRVCGTPIKQIVQGQRSTYFCPTCQR. Arg266 functions as the Proton donor; for delta-elimination activity in the catalytic mechanism.

Belongs to the FPG family. In terms of assembly, monomer. It depends on Zn(2+) as a cofactor.

The enzyme catalyses Hydrolysis of DNA containing ring-opened 7-methylguanine residues, releasing 2,6-diamino-4-hydroxy-5-(N-methyl)formamidopyrimidine.. The catalysed reaction is 2'-deoxyribonucleotide-(2'-deoxyribose 5'-phosphate)-2'-deoxyribonucleotide-DNA = a 3'-end 2'-deoxyribonucleotide-(2,3-dehydro-2,3-deoxyribose 5'-phosphate)-DNA + a 5'-end 5'-phospho-2'-deoxyribonucleoside-DNA + H(+). Its function is as follows. Involved in base excision repair of DNA damaged by oxidation or by mutagenic agents. Acts as a DNA glycosylase that recognizes and removes damaged bases. Has a preference for oxidized purines, such as 7,8-dihydro-8-oxoguanine (8-oxoG). Has AP (apurinic/apyrimidinic) lyase activity and introduces nicks in the DNA strand. Cleaves the DNA backbone by beta-delta elimination to generate a single-strand break at the site of the removed base with both 3'- and 5'-phosphates. The protein is Formamidopyrimidine-DNA glycosylase of Paraburkholderia phytofirmans (strain DSM 17436 / LMG 22146 / PsJN) (Burkholderia phytofirmans).